The sequence spans 370 residues: Putative F-box protein At1g47390 (370 aa).

An F-box domain is found at 1–47 (MAPEEKLPCELIEEILSRVPPESLVRFRTVSKKWNALFDDKMFINNH).

This Arabidopsis thaliana (Mouse-ear cress) protein is Putative F-box protein At1g47390.